A 61-amino-acid chain; its full sequence is Large ribosomal subunit protein bL32 (61 aa).

The protein belongs to the bacterial ribosomal protein bL32 family.

This chain is Large ribosomal subunit protein bL32, found in Hyphomonas neptunium (strain ATCC 15444).